A 293-amino-acid polypeptide reads, in one-letter code: MAVITAAMVGELRALTDAPMMECKKALTEADGDPVKAEEILRVKLGSKASKAATRVTAEGVVAAYVSGNVGALIEVNCETDFVTKNDDFLGFANTLVKLVAEKNPADVAALSALPLEGKTVEETRAALIGRIGENMSIRRFVRFETTGKLASYLHGTRIGVMVDFEGADEQVGKDVAMHIAAMKPVALSSDNVPADLIAKERSVAELKAAESNKPADIVAKMIEGSVQKYLKEVSLLNQSFVKNDKQTVEQMLKEAKSTVKSFTMFVVGEGIEKKQDDFAAEVAAQVAAAKQA.

Positions 80–83 (TDFV) are involved in Mg(2+) ion dislocation from EF-Tu.

This sequence belongs to the EF-Ts family.

The protein localises to the cytoplasm. Functionally, associates with the EF-Tu.GDP complex and induces the exchange of GDP to GTP. It remains bound to the aminoacyl-tRNA.EF-Tu.GTP complex up to the GTP hydrolysis stage on the ribosome. This Janthinobacterium sp. (strain Marseille) (Minibacterium massiliensis) protein is Elongation factor Ts.